The chain runs to 329 residues: 4-hydroxythreonine-4-phosphate dehydrogenase (329 aa).

Substrate is bound by residues His-136 and Thr-137. His-166, His-211, and His-266 together coordinate a divalent metal cation. Substrate contacts are provided by Lys-274, Asn-283, and Arg-292.

It belongs to the PdxA family. In terms of assembly, homodimer. Zn(2+) is required as a cofactor. Requires Mg(2+) as cofactor. It depends on Co(2+) as a cofactor.

The protein localises to the cytoplasm. The catalysed reaction is 4-(phosphooxy)-L-threonine + NAD(+) = 3-amino-2-oxopropyl phosphate + CO2 + NADH. It participates in cofactor biosynthesis; pyridoxine 5'-phosphate biosynthesis; pyridoxine 5'-phosphate from D-erythrose 4-phosphate: step 4/5. In terms of biological role, catalyzes the NAD(P)-dependent oxidation of 4-(phosphooxy)-L-threonine (HTP) into 2-amino-3-oxo-4-(phosphooxy)butyric acid which spontaneously decarboxylates to form 3-amino-2-oxopropyl phosphate (AHAP). This is 4-hydroxythreonine-4-phosphate dehydrogenase from Escherichia coli O139:H28 (strain E24377A / ETEC).